A 370-amino-acid chain; its full sequence is 4-hydroxy-3-methylbut-2-en-1-yl diphosphate synthase (flavodoxin) (370 aa).

Residues C268, C271, C303, and E310 each coordinate [4Fe-4S] cluster.

Belongs to the IspG family. [4Fe-4S] cluster serves as cofactor.

The enzyme catalyses (2E)-4-hydroxy-3-methylbut-2-enyl diphosphate + oxidized [flavodoxin] + H2O + 2 H(+) = 2-C-methyl-D-erythritol 2,4-cyclic diphosphate + reduced [flavodoxin]. The protein operates within isoprenoid biosynthesis; isopentenyl diphosphate biosynthesis via DXP pathway; isopentenyl diphosphate from 1-deoxy-D-xylulose 5-phosphate: step 5/6. In terms of biological role, converts 2C-methyl-D-erythritol 2,4-cyclodiphosphate (ME-2,4cPP) into 1-hydroxy-2-methyl-2-(E)-butenyl 4-diphosphate. This is 4-hydroxy-3-methylbut-2-en-1-yl diphosphate synthase (flavodoxin) from Bacillus cereus (strain G9842).